The sequence spans 431 residues: Histidine--tRNA ligase (431 aa).

The protein belongs to the class-II aminoacyl-tRNA synthetase family. In terms of assembly, homodimer.

It localises to the cytoplasm. The catalysed reaction is tRNA(His) + L-histidine + ATP = L-histidyl-tRNA(His) + AMP + diphosphate + H(+). In Finegoldia magna (strain ATCC 29328 / DSM 20472 / WAL 2508) (Peptostreptococcus magnus), this protein is Histidine--tRNA ligase.